A 286-amino-acid chain; its full sequence is 3-hydroxybutyryl-CoA dehydrogenase (286 aa).

This sequence belongs to the 3-hydroxyacyl-CoA dehydrogenase family.

The enzyme catalyses 3-hydroxybutanoyl-CoA + NAD(+) = acetoacetyl-CoA + NADH + H(+). It catalyses the reaction (3S)-3-hydroxybutanoyl-CoA + NADP(+) = acetoacetyl-CoA + NADPH + H(+). It functions in the pathway lipid metabolism; butanoate metabolism. The polypeptide is 3-hydroxybutyryl-CoA dehydrogenase (fadB2) (Mycobacterium tuberculosis (strain CDC 1551 / Oshkosh)).